Consider the following 322-residue polypeptide: Epiphycan (322 aa).

A signal peptide spans 1–19 (MKTLAGLVLGLVIFDAAVT). O-linked (GalNAc...) threonine glycosylation is present at T60. S64 is a glycosylation site (O-linked (Xyl...) (dermatan sulfate) serine). A disordered region spans residues 64–101 (SGNRELLTPPPQPEKAQEEEEEEESTPRLIDGSSPQEP). S96 carries O-linked (GalNAc...) serine glycosylation. The region spanning 106 to 143 (VLGPHTNEDFPTCLLCTCISTTVYCDDHELDAIPPLPK) is the LRRNT domain. A disulfide bridge connects residues C118 and C130. LRR repeat units follow at residues 144 to 165 (NTAYFYSRFNRIKKINKNDFAS), 168 to 189 (DLKRIDLTSNLISEIDEDAFRK), 192 to 213 (QLRELVLRDNKIRQLPELPTTL), 238 to 258 (DLHHLYLTDNNLDHIPLPLPE), and 259 to 280 (NLRALHLQNNNILEMHEDTFCN). A disulfide bond links C279 and C312. Residues N283 and N302 are each glycosylated (N-linked (GlcNAc...) asparagine). Residues 290–310 (ALEDIRLDGNPINLSKTPQAY) form an LRR 6 repeat.

The protein belongs to the small leucine-rich proteoglycan (SLRP) family. SLRP class III subfamily. Post-translationally, the O-linked polysaccharides on Thr-60 and Ser-96 are probably the mucin type linked to GalNAc. There is one glycosaminoglycan chain, known to be dermatan sulfate, and it is probably the O-glycosylation at Ser-64. As to expression, cartilage, ligament, and placenta.

Its subcellular location is the secreted. It is found in the extracellular space. The protein resides in the extracellular matrix. Its function is as follows. May have a role in bone formation and also in establishing the ordered structure of cartilage through matrix organization. The polypeptide is Epiphycan (EPYC) (Homo sapiens (Human)).